Consider the following 366-residue polypeptide: 3-dehydroquinate synthase (366 aa).

Residues 75–80 (DGEQYK), 109–113 (GVIGD), 133–134 (TT), K146, K155, and 173–176 (CLST) each bind NAD(+). Residues E188, H251, and H268 each contribute to the Zn(2+) site.

Belongs to the sugar phosphate cyclases superfamily. Dehydroquinate synthase family. It depends on NAD(+) as a cofactor. Co(2+) is required as a cofactor. The cofactor is Zn(2+).

It localises to the cytoplasm. The catalysed reaction is 7-phospho-2-dehydro-3-deoxy-D-arabino-heptonate = 3-dehydroquinate + phosphate. The protein operates within metabolic intermediate biosynthesis; chorismate biosynthesis; chorismate from D-erythrose 4-phosphate and phosphoenolpyruvate: step 2/7. In terms of biological role, catalyzes the conversion of 3-deoxy-D-arabino-heptulosonate 7-phosphate (DAHP) to dehydroquinate (DHQ). This chain is 3-dehydroquinate synthase, found in Vibrio parahaemolyticus serotype O3:K6 (strain RIMD 2210633).